The following is a 1370-amino-acid chain: Reverse gyrase 1 (1370 aa).

The RG N-terminal-type zinc finger occupies 6–47; the sequence is AASRGVYRYLCPNCGGPNSEERLSRGLPCPRCLPRLPRKGVS. Cysteine 16, cysteine 19, cysteine 34, and cysteine 37 together coordinate Zn(2+). ATP is bound by residues glutamine 95 and 112 to 119; that span reads APTGVGKT. A Helicase ATP-binding domain is found at 99–287; that stretch reads AKRLARGDSF…RKKLLEVKRR (189 aa). A DEAD box motif is present at residues 220-223; it reads DDVD. The topoisomerase I stretch occupies residues 643 to 1370; it reads ELVRTALLVV…VSRVWGAGVG (728 aa). One can recognise a Toprim domain in the interval 647–825; that stretch reads TALLVVESPN…DIKRLEFHEV (179 aa). Mg(2+) is bound at residue glutamate 653. Residues 744–772 form an RG C-terminal-type zinc finger; it reads IKRCLDCGYQFVDEASRCPRCGSELIRNS. Zn(2+) is bound by residues cysteine 747, cysteine 750, cysteine 761, and cysteine 764. Residue aspartate 794 coordinates Mg(2+). The Topo IA-type catalytic domain occupies 841-1323; that stretch reads DDNLVDAQVV…SVFNEISDLA (483 aa). Tyrosine 1028 acts as the O-(5'-phospho-DNA)-tyrosine intermediate in catalysis.

The protein in the N-terminal section; belongs to the DEAD box helicase family. DDVD subfamily. This sequence in the C-terminal section; belongs to the type IA topoisomerase family. In terms of assembly, monomer. Requires Zn(2+) as cofactor. It depends on Mg(2+) as a cofactor.

It is found in the cytoplasm. It carries out the reaction ATP + H2O = ADP + phosphate + H(+). Its function is as follows. Modifies the topological state of DNA by introducing positive supercoils in an ATP-dependent process, increasing the linking number in steps of +1. Binds to single-stranded DNA, transiently cleaves and then rejoins the ends, introducing a positive supercoil in the process. The scissile phosphodiester is attacked by the catalytic tyrosine of the enzyme, resulting in the formation of a DNA-(5'-phosphotyrosyl)-enzyme intermediate. Probably involved in rewinding DNA strands in regions of the chromosome that have opened up to allow replication, transcription, DNA repair and/or for DNA protection. The protein is Reverse gyrase 1 of Aeropyrum pernix (strain ATCC 700893 / DSM 11879 / JCM 9820 / NBRC 100138 / K1).